Consider the following 215-residue polypeptide: Formate dehydrogenase subunit beta (215 aa).

Residues Lys-3 to Pro-32 enclose the 4Fe-4S ferredoxin-type 1 domain. 12 residues coordinate [4Fe-4S] cluster: Cys-12, Cys-15, Cys-18, Cys-22, Cys-73, Cys-76, Cys-81, Cys-121, Cys-138, Cys-141, Cys-153, and Cys-157. The 4Fe-4S ferredoxin-type 2 domain maps to Val-129–Ser-168.

Heterodimer of alpha (FdhA) and beta (FdhB) subunits. The cofactor is [4Fe-4S] cluster.

Its subcellular location is the periplasm. In terms of biological role, beta chain of the formate dehydrogenase (FDH) catalyzes the reversible two-electron oxidation of formate to carbon dioxide. FDH loses activity in the presence of air, but this activity can be restored. This chain is an electron transfer unit. This Megalodesulfovibrio gigas (strain ATCC 19364 / DSM 1382 / NCIMB 9332 / VKM B-1759) (Desulfovibrio gigas) protein is Formate dehydrogenase subunit beta.